Here is a 31-residue protein sequence, read N- to C-terminus: Potassium channel toxin alpha-KTx 5.4 (31 aa).

3 disulfide bridges follow: C3-C21, C8-C26, and C12-C28. The [R/K]XCQ motif stretch occupies residues 6–9; that stretch reads RRCE. Y31 bears the Tyrosine amide mark.

This sequence belongs to the short scorpion toxin superfamily. Potassium channel inhibitor family. Alpha-KTx 05 subfamily. In terms of tissue distribution, expressed by the venom gland.

It localises to the secreted. Functionally, blocks small conductance calcium-activated potassium channels. Shows activity on KCa2.2/KCNN2 (IC(50)=0.0243 nM), KCa2.3/KCNN3 (IC(50)=1.7 nM), and KCa2.1/KCNN1 (IC(50)=42 nM). Induces cell death when tested on human T lymphoblastic leukemia Jurkat E6.1 and human breast cancer MDA-MB-231 cell lines which constituvely express KCa2.2/KCNN2, but not on human peripheral blood lymphocytes (which do not express KCa2.2/KCNN2). The polypeptide is Potassium channel toxin alpha-KTx 5.4 (Hottentotta tamulus (Eastern Indian scorpion)).